Consider the following 23-residue polypeptide: MALNLQDKQAIVAEVSEVAKGAL.

It belongs to the universal ribosomal protein uL10 family. In terms of assembly, part of the ribosomal stalk of the 50S ribosomal subunit. The N-terminus interacts with L11 and the large rRNA to form the base of the stalk. The C-terminus forms an elongated spine to which L12 dimers bind in a sequential fashion forming a multimeric L10(L12)X complex.

Its function is as follows. Forms part of the ribosomal stalk, playing a central role in the interaction of the ribosome with GTP-bound translation factors. The polypeptide is Large ribosomal subunit protein uL10 (rplJ) (Klebsiella pneumoniae).